Consider the following 68-residue polypeptide: UPF0253 protein VF_0662 (68 aa).

The protein belongs to the UPF0253 family.

The sequence is that of UPF0253 protein VF_0662 from Aliivibrio fischeri (strain ATCC 700601 / ES114) (Vibrio fischeri).